A 103-amino-acid polypeptide reads, in one-letter code: ATP-dependent Clp protease adapter protein ClpS (103 aa).

The protein belongs to the ClpS family. As to quaternary structure, binds to the N-terminal domain of the chaperone ClpA.

Involved in the modulation of the specificity of the ClpAP-mediated ATP-dependent protein degradation. This Neisseria meningitidis serogroup A / serotype 4A (strain DSM 15465 / Z2491) protein is ATP-dependent Clp protease adapter protein ClpS.